The chain runs to 300 residues: Tyrosine recombinase XerC (300 aa).

One can recognise a Core-binding (CB) domain in the interval 1–86; sequence MESVLDAFDQ…AVKTFTAWAV (86 aa). The Tyr recombinase domain maps to 107–294; that stretch reads TLPAVLRQDQ…TVARLRAVHD (188 aa). Catalysis depends on residues R151, K175, H246, R249, and H272. Catalysis depends on Y281, which acts as the O-(3'-phospho-DNA)-tyrosine intermediate.

It belongs to the 'phage' integrase family. XerC subfamily. Forms a cyclic heterotetrameric complex composed of two molecules of XerC and two molecules of XerD.

It localises to the cytoplasm. In terms of biological role, site-specific tyrosine recombinase, which acts by catalyzing the cutting and rejoining of the recombining DNA molecules. The XerC-XerD complex is essential to convert dimers of the bacterial chromosome into monomers to permit their segregation at cell division. It also contributes to the segregational stability of plasmids. In Mycobacterium sp. (strain JLS), this protein is Tyrosine recombinase XerC.